We begin with the raw amino-acid sequence, 310 residues long: Putative S-adenosyl-L-methionine-dependent methyltransferase MMAR_0357 (310 aa).

S-adenosyl-L-methionine-binding positions include aspartate 132 and 161 to 162; that span reads DL.

It belongs to the UPF0677 family.

Its function is as follows. Exhibits S-adenosyl-L-methionine-dependent methyltransferase activity. The chain is Putative S-adenosyl-L-methionine-dependent methyltransferase MMAR_0357 from Mycobacterium marinum (strain ATCC BAA-535 / M).